Reading from the N-terminus, the 362-residue chain is Methylthioribose-1-phosphate isomerase (362 aa).

The active-site Proton donor is the Asp252.

The protein belongs to the eIF-2B alpha/beta/delta subunits family. MtnA subfamily.

It is found in the cytoplasm. The protein localises to the nucleus. It carries out the reaction 5-(methylsulfanyl)-alpha-D-ribose 1-phosphate = 5-(methylsulfanyl)-D-ribulose 1-phosphate. It participates in amino-acid biosynthesis; L-methionine biosynthesis via salvage pathway; L-methionine from S-methyl-5-thio-alpha-D-ribose 1-phosphate: step 1/6. In terms of biological role, catalyzes the interconversion of methylthioribose-1-phosphate (MTR-1-P) into methylthioribulose-1-phosphate (MTRu-1-P). In Drosophila pseudoobscura pseudoobscura (Fruit fly), this protein is Methylthioribose-1-phosphate isomerase.